Here is a 546-residue protein sequence, read N- to C-terminus: Chaperonin GroEL (546 aa).

Residues 30–33 (TLGP), lysine 51, 87–91 (DGTTT), glycine 415, 479–481 (NAA), and aspartate 495 contribute to the ATP site. A disordered region spans residues 527–546 (EEKPDVSASSGGMGGMGGMM). Residues 537–546 (GGMGGMGGMM) show a composition bias toward gly residues.

Belongs to the chaperonin (HSP60) family. Forms a cylinder of 14 subunits composed of two heptameric rings stacked back-to-back. Interacts with the co-chaperonin GroES.

Its subcellular location is the cytoplasm. The catalysed reaction is ATP + H2O + a folded polypeptide = ADP + phosphate + an unfolded polypeptide.. Functionally, together with its co-chaperonin GroES, plays an essential role in assisting protein folding. The GroEL-GroES system forms a nano-cage that allows encapsulation of the non-native substrate proteins and provides a physical environment optimized to promote and accelerate protein folding. This Baumannia cicadellinicola subsp. Homalodisca coagulata protein is Chaperonin GroEL.